The primary structure comprises 1162 residues: ATP-dependent helicase/deoxyribonuclease subunit B (1162 aa).

Residues 1–275 enclose the UvrD-like helicase ATP-binding domain; that stretch reads MELNAYIGRA…QFFKQQYRFN (275 aa). Residue 8 to 15 participates in ATP binding; sequence GRAGTGKS. The region spanning 269-583 is the UvrD-like helicase C-terminal domain; the sequence is KQQYRFNNKD…SIGTMDLAKV (315 aa). [4Fe-4S] cluster is bound by residues cysteine 784, cysteine 1117, cysteine 1120, and cysteine 1126.

This sequence belongs to the helicase family. AddB/RexB type 1 subfamily. In terms of assembly, heterodimer of AddA and AddB. It depends on Mg(2+) as a cofactor. [4Fe-4S] cluster is required as a cofactor.

Functionally, the heterodimer acts as both an ATP-dependent DNA helicase and an ATP-dependent, dual-direction single-stranded exonuclease. Recognizes the chi site generating a DNA molecule suitable for the initiation of homologous recombination. The AddB subunit has 5' -&gt; 3' nuclease activity but not helicase activity. This Staphylococcus haemolyticus (strain JCSC1435) protein is ATP-dependent helicase/deoxyribonuclease subunit B.